A 166-amino-acid chain; its full sequence is Phosphopantetheine adenylyltransferase (166 aa).

Position 11 (Ser-11) interacts with substrate. Residues 11-12 and His-19 contribute to the ATP site; that span reads SF. Lys-43, Ala-76, and Arg-90 together coordinate substrate. Residues 91–93, Glu-101, and 126–132 contribute to the ATP site; these read GLR and LQPVSSS.

This sequence belongs to the bacterial CoaD family. In terms of assembly, homohexamer. It depends on Mg(2+) as a cofactor.

It localises to the cytoplasm. It carries out the reaction (R)-4'-phosphopantetheine + ATP + H(+) = 3'-dephospho-CoA + diphosphate. The protein operates within cofactor biosynthesis; coenzyme A biosynthesis; CoA from (R)-pantothenate: step 4/5. Functionally, reversibly transfers an adenylyl group from ATP to 4'-phosphopantetheine, yielding dephospho-CoA (dPCoA) and pyrophosphate. The sequence is that of Phosphopantetheine adenylyltransferase from Streptococcus equi subsp. equi (strain 4047).